A 331-amino-acid polypeptide reads, in one-letter code: Biotin synthase (331 aa).

One can recognise a Radical SAM core domain in the interval 53–272 (NHVETASLLS…LATARVMMPR (220 aa)). Residues C68, C72, and C75 each contribute to the [4Fe-4S] cluster site. Residues C112, C143, C203, and R276 each coordinate [2Fe-2S] cluster.

It belongs to the radical SAM superfamily. Biotin synthase family. Homodimer. [4Fe-4S] cluster is required as a cofactor. [2Fe-2S] cluster serves as cofactor.

The enzyme catalyses (4R,5S)-dethiobiotin + (sulfur carrier)-SH + 2 reduced [2Fe-2S]-[ferredoxin] + 2 S-adenosyl-L-methionine = (sulfur carrier)-H + biotin + 2 5'-deoxyadenosine + 2 L-methionine + 2 oxidized [2Fe-2S]-[ferredoxin]. It participates in cofactor biosynthesis; biotin biosynthesis; biotin from 7,8-diaminononanoate: step 2/2. Functionally, catalyzes the conversion of dethiobiotin (DTB) to biotin by the insertion of a sulfur atom into dethiobiotin via a radical-based mechanism. This Bradyrhizobium diazoefficiens (strain JCM 10833 / BCRC 13528 / IAM 13628 / NBRC 14792 / USDA 110) protein is Biotin synthase.